The primary structure comprises 279 residues: MTRPLSYFHLHLISDATGETLLAAGRAAAAQYANARAIEHIYPLIRTEKQLRKVLEGIDAEPGIVLYTVVDQKLAAIIDESCADMGVPSVSVLEPVLNTFQSYLGAPAHRRASAQHVLNADYFRRIDALNFMMEHDDGQLPLDIEEADVIIVGISRTSKTPTSIYLANRGIKAANVPLVLGIPVPEILFAAKRPLIVGLVATAERISQIRQNRPIGNIPSLDTGLYTDRVSISEELAYARNLCNRHGWPIIDVSRRSIEETAAAILALLRNGKKEGSSS.

Residue 153–160 participates in ADP binding; that stretch reads GISRTSKT.

This sequence belongs to the pyruvate, phosphate/water dikinase regulatory protein family. PDRP subfamily.

It catalyses the reaction N(tele)-phospho-L-histidyl/L-threonyl-[pyruvate, phosphate dikinase] + ADP = N(tele)-phospho-L-histidyl/O-phospho-L-threonyl-[pyruvate, phosphate dikinase] + AMP + H(+). The enzyme catalyses N(tele)-phospho-L-histidyl/O-phospho-L-threonyl-[pyruvate, phosphate dikinase] + phosphate + H(+) = N(tele)-phospho-L-histidyl/L-threonyl-[pyruvate, phosphate dikinase] + diphosphate. In terms of biological role, bifunctional serine/threonine kinase and phosphorylase involved in the regulation of the pyruvate, phosphate dikinase (PPDK) by catalyzing its phosphorylation/dephosphorylation. The sequence is that of Putative pyruvate, phosphate dikinase regulatory protein from Brucella melitensis biotype 2 (strain ATCC 23457).